The chain runs to 718 residues: Catalase-peroxidase (718 aa).

Residues 98 to 219 constitute a cross-link (tryptophyl-tyrosyl-methioninium (Trp-Tyr) (with M-245)); it reads WHAAGTYRMG…LAATEMGLIY (122 aa). The active-site Proton acceptor is H99. Positions 219–245 form a cross-link, tryptophyl-tyrosyl-methioninium (Tyr-Met) (with W-98); sequence YVNPEGPQASGDPRSAAPFIRATFGNM. H260 provides a ligand contact to heme b.

It belongs to the peroxidase family. Peroxidase/catalase subfamily. In terms of assembly, homodimer or homotetramer. Heme b is required as a cofactor. Post-translationally, formation of the three residue Trp-Tyr-Met cross-link is important for the catalase, but not the peroxidase activity of the enzyme.

It carries out the reaction H2O2 + AH2 = A + 2 H2O. It catalyses the reaction 2 H2O2 = O2 + 2 H2O. Functionally, bifunctional enzyme with both catalase and broad-spectrum peroxidase activity. In Acinetobacter baumannii (strain ACICU), this protein is Catalase-peroxidase.